Consider the following 935-residue polypeptide: Progesterone receptor (935 aa).

The interval 1 to 49 is disordered; it reads MTELKAKGLRAPHVAGSPSSPKVGSPLPCRQATGQFPGSQTSDTLPEVS. Residues 1 to 164 form an AF3; mediates transcriptional activation region; that stretch reads MTELKAKGLR…PATQRVLSPL (164 aa). A modulating, Pro-Rich region spans residues 1 to 568; it reads MTELKAKGLR…YSFESLPQKI (568 aa). Position 20 is a phosphoserine (S20). Polar residues predominate over residues 32 to 44; the sequence is ATGQFPGSQTSDT. Positions 55–59 match the LXXL motif 1 motif; it reads LDGLL. The segment at 62 to 158 is disordered; it reads RICQAQDPPD…EDPPAAPATQ (97 aa). At S81 the chain carries Phosphoserine. The LXXL motif 2 motif lies at 115 to 119; it reads LDTLW. Residues S130 and S162 each carry the phosphoserine modification. The mediates transcriptional transrepression stretch occupies residues 165-305; it reads MSRSGGKAGD…LATTVTDFIH (141 aa). Positions 183-187 match the Nuclear localization signal motif; that stretch reads KVLPR. The tract at residues 187–233 is disordered; it reads RGLSPSRQLLLPTSGSPHWSGAPVKPSPQPAAVEVEEEDGSESEDSA. Phosphoserine is present on S190. Positions 191 to 203 are enriched in polar residues; the sequence is PSRQLLLPTSGSP. S213 is subject to Phosphoserine. The segment covering 220–231 has biased composition (acidic residues); that stretch reads EVEEEDGSESED. At S294 the chain carries Phosphoserine; by MAPK1. Residues 328–365 form a disordered region; sequence SYDGGSGAASAFAPPRSSPSASSTPVPGSDFPDCAYAP. The span at 335-356 shows a compositional bias: low complexity; it reads AASAFAPPRSSPSASSTPVPGS. S345 is modified (phosphoserine; by MAPK). K388 is covalently cross-linked (Glycyl lysine isopeptide (Lys-Gly) (interchain with G-Cter in SUMO); alternate). Residue K388 forms a Glycyl lysine isopeptide (Lys-Gly) (interchain with G-Cter in ubiquitin); alternate linkage. Positions 390–452 are disordered; it reads EEEGAEASTR…PASASVSSAS (63 aa). Position 400 is a phosphoserine; by CDK2 (S400). Pro residues predominate over residues 418–433; the sequence is PLGPPPPLPPRAPPSR. A compositionally biased stretch (low complexity) spans 434–452; the sequence is PGEAAVTAAPASASVSSAS. The segment at 456–548 is AF1; mediates transcriptional activation; sequence STLECILYKA…VYPPYLNYLR (93 aa). Residue K533 forms a Glycyl lysine isopeptide (Lys-Gly) (interchain with G-Cter in SUMO) linkage. 2 consecutive NR C4-type zinc fingers follow at residues 569–589 and 605–629; these read CLIC…CGSC and CAGR…LRKC. The segment at residues 569 to 641 is a DNA-binding region (nuclear receptor); that stretch reads CLICGDEASG…AGMVLGGRKF (73 aa). S678 bears the Phosphoserine mark. One can recognise an NR LBD domain in the interval 681–915; that stretch reads QDIQLIPPLI…EFPEMMSEVI (235 aa). The interval 689–935 is AF2; mediates transcriptional activation; that stretch reads LINLLLSIEP…MVKPLLFHKK (247 aa). R768 contributes to the progesterone binding site.

Belongs to the nuclear hormone receptor family. As to quaternary structure, interacts with SMARD1 and UNC45A. Interacts with CUEDC2; the interaction promotes ubiquitination, decreases sumoylation, and represses transcriptional activity. Interacts with PIAS3; the interaction promotes sumoylation of PR in a hormone-dependent manner, inhibits DNA-binding, and alters nuclear export. Interacts with SP1; the interaction requires ligand-induced phosphorylation on Ser-345 by ERK1/2-MAPK. Interacts with PRMT2. Interacts with NCOA2 and NCOA1. Interacts with KLF9. Interacts with GTF2B. Post-translationally, phosphorylated on multiple serine sites. Several of these sites are hormone-dependent. Phosphorylation on Ser-294 is highly hormone-dependent and modulates ubiquitination and sumoylation on Lys-388. Phosphorylation on Ser-345 also requires induction by hormone. Basal phosphorylation on Ser-81, Ser-162, Ser-190 and Ser-400 is increased in response to progesterone and can be phosphorylated in vitro by the CDK2-A1 complex. Increased levels of phosphorylation on Ser-400 also in the presence of EGF, heregulin, IGF, PMA and FBS. Phosphorylation at this site by CDK2 is ligand-independent, and increases nuclear translocation and transcriptional activity. Phosphorylation at Ser-162 and Ser-294, but not at Ser-190, is impaired during the G(2)/M phase of the cell cycle. Phosphorylation on Ser-345 by ERK1/2 MAPK is required for interaction with SP1. In terms of processing, sumoylation is hormone-dependent and represses transcriptional activity. Sumoylation on all three sites is enhanced by PIAS3. Desumoylated by SENP1. Sumoylation on Lys-388, the main site of sumoylation, is repressed by ubiquitination on the same site, and modulated by phosphorylation at Ser-294. Ubiquitination is hormone-dependent and represses sumoylation on the same site. Promoted by MAPK-mediated phosphorylation on Ser-294. Ubiquitinated by UBR5, leading to its degradation: UBR5 specifically recognizes and binds ligand-bound PGR when it is not associated with coactivators (NCOAs). In presence of NCOAs, the UBR5-degron is not accessible, preventing its ubiquitination and degradation. Post-translationally, palmitoylated by ZDHHC7 and ZDHHC21. Palmitoylation is required for plasma membrane targeting and for rapid intracellular signaling via ERK and AKT kinases and cAMP generation.

The protein resides in the nucleus. The protein localises to the cytoplasm. The steroid hormones and their receptors are involved in the regulation of eukaryotic gene expression and affect cellular proliferation and differentiation in target tissues. Transcriptional activator of several progesteron-dependent promoters in a variety of cell types. Involved in activation of SRC-dependent MAPK signaling on hormone stimulation. In Sapajus apella (Brown-capped capuchin), this protein is Progesterone receptor (PGR).